The following is a 201-amino-acid chain: Ribonuclease HII (201 aa).

The RNase H type-2 domain occupies leucine 10–proline 200. A divalent metal cation-binding residues include aspartate 16, glutamate 17, and aspartate 108.

The protein belongs to the RNase HII family. Mn(2+) is required as a cofactor. The cofactor is Mg(2+).

Its subcellular location is the cytoplasm. The catalysed reaction is Endonucleolytic cleavage to 5'-phosphomonoester.. Endonuclease that specifically degrades the RNA of RNA-DNA hybrids. The chain is Ribonuclease HII from Phocaeicola vulgatus (strain ATCC 8482 / DSM 1447 / JCM 5826 / CCUG 4940 / NBRC 14291 / NCTC 11154) (Bacteroides vulgatus).